A 509-amino-acid polypeptide reads, in one-letter code: uncharacterized protein (509 aa).

In terms of domain architecture, G spans 108–225 (GKSSLCNLLA…KRHKPLFPVI (118 aa)).

This is an uncharacterized protein from Acinetobacter baylyi (strain ATCC 33305 / BD413 / ADP1).